The following is a 472-amino-acid chain: Proline--tRNA ligase (472 aa).

Belongs to the class-II aminoacyl-tRNA synthetase family. ProS type 3 subfamily. In terms of assembly, homodimer.

Its subcellular location is the cytoplasm. It carries out the reaction tRNA(Pro) + L-proline + ATP = L-prolyl-tRNA(Pro) + AMP + diphosphate. In terms of biological role, catalyzes the attachment of proline to tRNA(Pro) in a two-step reaction: proline is first activated by ATP to form Pro-AMP and then transferred to the acceptor end of tRNA(Pro). This chain is Proline--tRNA ligase, found in Ureaplasma urealyticum serovar 10 (strain ATCC 33699 / Western).